We begin with the raw amino-acid sequence, 285 residues long: Bifunctional protein FolD (285 aa).

NADP(+) contacts are provided by residues glycine 166–serine 168 and isoleucine 232.

The protein belongs to the tetrahydrofolate dehydrogenase/cyclohydrolase family. As to quaternary structure, homodimer.

The enzyme catalyses (6R)-5,10-methylene-5,6,7,8-tetrahydrofolate + NADP(+) = (6R)-5,10-methenyltetrahydrofolate + NADPH. The catalysed reaction is (6R)-5,10-methenyltetrahydrofolate + H2O = (6R)-10-formyltetrahydrofolate + H(+). It functions in the pathway one-carbon metabolism; tetrahydrofolate interconversion. Its activity is regulated as follows. The NAD(+)-dependent dehydrogenase is activated by inorganic phosphate. Functionally, catalyzes the oxidation of 5,10-methylenetetrahydrofolate to 5,10-methenyltetrahydrofolate and then the hydrolysis of 5,10-methenyltetrahydrofolate to 10-formyltetrahydrofolate. This is Bifunctional protein FolD from Photobacterium phosphoreum.